Reading from the N-terminus, the 727-residue chain is Fatty acid oxidation complex subunit alpha (727 aa).

The interval 16 to 205 (NQTASVFSFD…RLGLVDDAVP (190 aa)) is enoyl-CoA hydratase. The interval 321-727 (AKIKHVGILG…MAEQNKSFYP (407 aa)) is 3-hydroxyacyl-CoA dehydrogenase.

This sequence in the N-terminal section; belongs to the enoyl-CoA hydratase/isomerase family. The protein in the central section; belongs to the 3-hydroxyacyl-CoA dehydrogenase family. As to quaternary structure, heterotetramer of two alpha chains (FadJ) and two beta chains (FadI).

It is found in the cytoplasm. The catalysed reaction is a (3S)-3-hydroxyacyl-CoA = a (2E)-enoyl-CoA + H2O. It catalyses the reaction a 4-saturated-(3S)-3-hydroxyacyl-CoA = a (3E)-enoyl-CoA + H2O. The enzyme catalyses a (3S)-3-hydroxyacyl-CoA + NAD(+) = a 3-oxoacyl-CoA + NADH + H(+). It carries out the reaction (3S)-3-hydroxybutanoyl-CoA = (3R)-3-hydroxybutanoyl-CoA. Its pathway is lipid metabolism; fatty acid beta-oxidation. Functionally, catalyzes the formation of a hydroxyacyl-CoA by addition of water on enoyl-CoA. Also exhibits 3-hydroxyacyl-CoA epimerase and 3-hydroxyacyl-CoA dehydrogenase activities. The chain is Fatty acid oxidation complex subunit alpha from Photorhabdus laumondii subsp. laumondii (strain DSM 15139 / CIP 105565 / TT01) (Photorhabdus luminescens subsp. laumondii).